A 72-amino-acid polypeptide reads, in one-letter code: Translation initiation factor IF-1 (72 aa).

The S1-like domain occupies 1–72; sequence MSKDDSIEFE…TKGRITYRMK (72 aa).

It belongs to the IF-1 family. In terms of assembly, component of the 30S ribosomal translation pre-initiation complex which assembles on the 30S ribosome in the order IF-2 and IF-3, IF-1 and N-formylmethionyl-tRNA(fMet); mRNA recruitment can occur at any time during PIC assembly.

The protein localises to the cytoplasm. Its function is as follows. One of the essential components for the initiation of protein synthesis. Stabilizes the binding of IF-2 and IF-3 on the 30S subunit to which N-formylmethionyl-tRNA(fMet) subsequently binds. Helps modulate mRNA selection, yielding the 30S pre-initiation complex (PIC). Upon addition of the 50S ribosomal subunit IF-1, IF-2 and IF-3 are released leaving the mature 70S translation initiation complex. This chain is Translation initiation factor IF-1, found in Xanthomonas campestris pv. campestris (strain 8004).